The chain runs to 314 residues: 3'-5' exoribonuclease YhaM (314 aa).

The segment at residues 14 to 90 (VDLYLLIKSS…QLKLRNIRPA (77 aa)) is a DNA-binding region (OB). An HD domain is found at 163-279 (HVVSMLNLAK…LHYIDNLDAK (117 aa)).

The protein belongs to the YhaM family.

Shows a 3'-5' exoribonuclease activity. In Bacillus licheniformis (strain ATCC 14580 / DSM 13 / JCM 2505 / CCUG 7422 / NBRC 12200 / NCIMB 9375 / NCTC 10341 / NRRL NRS-1264 / Gibson 46), this protein is 3'-5' exoribonuclease YhaM.